The chain runs to 365 residues: Prostaglandin E2 receptor EP3 subtype (365 aa).

Residues 1–30 (MAGVWAPEHSVEAHSNQSSAADGCGSVSVA) lie on the Extracellular side of the membrane. An N-linked (GlcNAc...) asparagine glycan is attached at asparagine 16. The helical transmembrane segment at 31 to 55 (FPITMMVTGFVGNALAMLLVVRSYR) threads the bilayer. Over 56–68 (RRESKRKKSFLLC) the chain is Cytoplasmic. The helical transmembrane segment at 69 to 89 (IGWLALTDLVGQLLTSPVVIL) threads the bilayer. Over 90–108 (VYLSQRRWEQLDPSGRLCT) the chain is Extracellular. A disulfide bridge connects residues cysteine 107 and cysteine 184. The chain crosses the membrane as a helical span at residues 109–130 (FFGLTMTVFGLSSLLVASAMAV). Over 131–151 (ERALAIRAPHWYASHMKTRAT) the chain is Cytoplasmic. Residues 152 to 173 (PVLLGVWLSVLAFALLPVLGVG) form a helical membrane-spanning segment. The Extracellular portion of the chain corresponds to 174–203 (RYSVQWPGTWCFISTGPAGNETDSAREPGS). The N-linked (GlcNAc...) asparagine glycan is linked to asparagine 193. A helical membrane pass occupies residues 204 to 229 (VAFASAFACLGLLALVVTFACNLATI). The Cytoplasmic segment spans residues 230–259 (KALVSRCRAKAAASQSSAQWGRITTETAIQ). Residues 260-283 (LMGIMCVLSVCWSPLLIMMLKMIF) form a helical membrane-spanning segment. Residues 284–303 (NQMSVEQCKTQMGKEKECNS) lie on the Extracellular side of the membrane. A helical transmembrane segment spans residues 304–325 (FLIAVRLASLNQILDPWVYLLL). The Cytoplasmic segment spans residues 326 to 365 (RKILLRKFCQIRDHTNYASSSTSLPCPGSSVLMWSDQLER).

It belongs to the G-protein coupled receptor 1 family. In terms of assembly, interacts (via C-terminus) with MKLN1. Does not interact with MKLN1. Principally expressed in the tubules of the renal medulla. Specific expression is seen in medullary and cortical thick ascending limbs; lower levels are detected in cortical and inner medullary collecting ducts. Not detected significantly in the glomeruli. In the brain, expressed in all types of glial cells.

It is found in the cell membrane. Receptor for prostaglandin E2 (PGE2). Required for normal development of fever in response to pyrinogens, including IL1B, prostaglandin E2 and bacterial lipopolysaccharide (LPS). Required for normal potentiation of platelet aggregation by prostaglandin E2, and thus plays a role in the regulation of blood coagulation. Required for increased HCO3(-) secretion in the duodenum in response to mucosal acidification, and thereby contributes to the protection of the mucosa against acid-induced ulceration. Not required for normal kidney function, normal urine volume and osmolality. Its function is as follows. Receptor for prostaglandin E2 (PGE2); ligand binding activates a signaling cascade via G(i) proteins that leads to the inhibition of adenylate cyclase. Functionally, receptor for prostaglandin E2 (PGE2); ligand binding can activate several distinct signaling cascades, resulting in activation or inhibition of adenylate cyclase. The protein is Prostaglandin E2 receptor EP3 subtype (Ptger3) of Rattus norvegicus (Rat).